The following is a 153-amino-acid chain: Large ribosomal subunit protein bL27m (153 aa).

The N-terminal 37 residues, 1–37 (MINQGLFIRVNNFQLLKASLAYKKASNILTFPPIRTS), are a transit peptide targeting the mitochondrion. The disordered stretch occupies residues 34-57 (IRTSTKHGGGSSKNTGDSAGRRLG).

Belongs to the bacterial ribosomal protein bL27 family. As to quaternary structure, component of the mitochondrial large ribosomal subunit (mt-LSU). Mature yeast 74S mitochondrial ribosomes consist of a small (37S) and a large (54S) subunit. The 37S small subunit contains a 15S ribosomal RNA (15S mt-rRNA) and at least 32 different proteins. The 54S large subunit contains a 21S rRNA (21S mt-rRNA) and at least 45 different proteins.

It localises to the mitochondrion. Its function is as follows. Component of the mitochondrial ribosome (mitoribosome), a dedicated translation machinery responsible for the synthesis of mitochondrial genome-encoded proteins, including at least some of the essential transmembrane subunits of the mitochondrial respiratory chain. The mitoribosomes are attached to the mitochondrial inner membrane and translation products are cotranslationally integrated into the membrane. The chain is Large ribosomal subunit protein bL27m (mrp7) from Schizosaccharomyces pombe (strain 972 / ATCC 24843) (Fission yeast).